The sequence spans 229 residues: MRLVIARCSVDYIGRLEAHLPMADRLLMVKADGSVSIHADDRAYKPLNWMTPPCTLTETTHEESETGESIPLWIVENKKGEQLRITIEALHSDMYYDLGEDPGLQKDGVEAHLQELLAEHIETLGDGYSLVRREYPTPIGPVDILCRDDKGGSVAVEIKRRGGIDGVEQLSRYLELLNRDDLLAPVAGVFAAQHIKPQARTLAEDRGIRCVTLDYDSLRGIESTELRLF.

This sequence belongs to the NucS endonuclease family.

Its subcellular location is the cytoplasm. Cleaves both 3' and 5' ssDNA extremities of branched DNA structures. In Corynebacterium diphtheriae (strain ATCC 700971 / NCTC 13129 / Biotype gravis), this protein is Endonuclease NucS.